A 451-amino-acid chain; its full sequence is Trigger factor (451 aa).

In terms of domain architecture, PPIase FKBP-type spans 163–248 (GDIIDMEYTV…IKALYVNILP (86 aa)).

This sequence belongs to the FKBP-type PPIase family. Tig subfamily.

It localises to the cytoplasm. It catalyses the reaction [protein]-peptidylproline (omega=180) = [protein]-peptidylproline (omega=0). In terms of biological role, involved in protein export. Acts as a chaperone by maintaining the newly synthesized protein in an open conformation. Functions as a peptidyl-prolyl cis-trans isomerase. This is Trigger factor from Leptospira borgpetersenii serovar Hardjo-bovis (strain JB197).